Consider the following 598-residue polypeptide: Serine/threonine-protein kinase cot-1 (598 aa).

Composition is skewed to polar residues over residues 1–16 (MDNT…TNDT), 24–33 (TYPTTPSTFP), and 99–126 (PRTS…TQTE). Disordered regions lie at residues 1-46 (MDNT…GGSQ), 80-148 (GSAG…NQKK), and 163-190 (RARE…RESI). One can recognise a Protein kinase domain in the interval 214 to 518 (YQTIKIIGKG…AHEIKSHAFF (305 aa)). ATP contacts are provided by residues 220–228 (IGKGAFGEV) and lysine 243. Catalysis depends on aspartate 337, which acts as the Proton acceptor. Residues 519 to 598 (RGVEFDSLRR…TFKRFDNNFR (80 aa)) enclose the AGC-kinase C-terminal domain.

It belongs to the protein kinase superfamily. STE Ser/Thr protein kinase family. COT1 subfamily.

The enzyme catalyses L-seryl-[protein] + ATP = O-phospho-L-seryl-[protein] + ADP + H(+). It carries out the reaction L-threonyl-[protein] + ATP = O-phospho-L-threonyl-[protein] + ADP + H(+). In terms of biological role, protein kinase required for hyphal elongation. The chain is Serine/threonine-protein kinase cot-1 (cot-1) from Neurospora crassa (strain ATCC 24698 / 74-OR23-1A / CBS 708.71 / DSM 1257 / FGSC 987).